Reading from the N-terminus, the 131-residue chain is Small ribosomal subunit protein uS8 (131 aa).

It belongs to the universal ribosomal protein uS8 family. As to quaternary structure, part of the 30S ribosomal subunit. Contacts proteins S5 and S12.

Functionally, one of the primary rRNA binding proteins, it binds directly to 16S rRNA central domain where it helps coordinate assembly of the platform of the 30S subunit. The protein is Small ribosomal subunit protein uS8 of Paraburkholderia xenovorans (strain LB400).